A 130-amino-acid polypeptide reads, in one-letter code: Holin-like protein CidA (130 aa).

4 consecutive transmembrane segments (helical) span residues Phe6 to Glu26, Leu31 to Phe51, Phe65 to Ala85, and Ile93 to Ile113.

It belongs to the CidA/LrgA family. CidA subfamily.

It localises to the cell membrane. In terms of biological role, increases the activity of extracellular murein hydrolases possibly by mediating their export via hole formation. Inhibited by the antiholin-like proteins LrgAB. In an unstressed cell, the LrgAB products probably inhibit the function of the CidAB proteins. When a cell is stressed by the addition of antibiotics or by other factors in the environment, the CidAB proteins possibly oligomerize within the bacterial cell membrane, creating lesions that disrupt the proton motive force, which in turn results in loss of cell viability. These lesions are also hypothesized to regulate the subsequent cell lysis by either allowing the murein hydrolases access to the cell wall substrate and/or regulating their activity by a possible change in the cell wall pH that results from loss of membrane potential. The polypeptide is Holin-like protein CidA (Staphylococcus epidermidis (strain ATCC 35984 / DSM 28319 / BCRC 17069 / CCUG 31568 / BM 3577 / RP62A)).